A 159-amino-acid polypeptide reads, in one-letter code: ATP synthase subunit b (159 aa).

A helical membrane pass occupies residues 8–28 (ILATIINFIILILILKHFFWD).

This sequence belongs to the ATPase B chain family. As to quaternary structure, F-type ATPases have 2 components, F(1) - the catalytic core - and F(0) - the membrane proton channel. F(1) has five subunits: alpha(3), beta(3), gamma(1), delta(1), epsilon(1). F(0) has three main subunits: a(1), b(2) and c(10-14). The alpha and beta chains form an alternating ring which encloses part of the gamma chain. F(1) is attached to F(0) by a central stalk formed by the gamma and epsilon chains, while a peripheral stalk is formed by the delta and b chains.

The protein resides in the cell membrane. Its function is as follows. F(1)F(0) ATP synthase produces ATP from ADP in the presence of a proton or sodium gradient. F-type ATPases consist of two structural domains, F(1) containing the extramembraneous catalytic core and F(0) containing the membrane proton channel, linked together by a central stalk and a peripheral stalk. During catalysis, ATP synthesis in the catalytic domain of F(1) is coupled via a rotary mechanism of the central stalk subunits to proton translocation. In terms of biological role, component of the F(0) channel, it forms part of the peripheral stalk, linking F(1) to F(0). This chain is ATP synthase subunit b, found in Clostridium perfringens (strain SM101 / Type A).